Here is a 706-residue protein sequence, read N- to C-terminus: Fatty acid oxidation complex subunit alpha (706 aa).

The enoyl-CoA hydratase stretch occupies residues 1-188 (MDKSFTLNRL…KMGLVDDVVP (188 aa)). The tract at residues 308-706 (KAVNKVMVLG…MAESGSKFYE (399 aa)) is 3-hydroxyacyl-CoA dehydrogenase.

The protein in the N-terminal section; belongs to the enoyl-CoA hydratase/isomerase family. It in the central section; belongs to the 3-hydroxyacyl-CoA dehydrogenase family. In terms of assembly, heterotetramer of two alpha chains (FadJ) and two beta chains (FadI).

The protein resides in the cytoplasm. It catalyses the reaction a (3S)-3-hydroxyacyl-CoA = a (2E)-enoyl-CoA + H2O. The catalysed reaction is a 4-saturated-(3S)-3-hydroxyacyl-CoA = a (3E)-enoyl-CoA + H2O. It carries out the reaction a (3S)-3-hydroxyacyl-CoA + NAD(+) = a 3-oxoacyl-CoA + NADH + H(+). The enzyme catalyses (3S)-3-hydroxybutanoyl-CoA = (3R)-3-hydroxybutanoyl-CoA. It functions in the pathway lipid metabolism; fatty acid beta-oxidation. In terms of biological role, catalyzes the formation of a hydroxyacyl-CoA by addition of water on enoyl-CoA. Also exhibits 3-hydroxyacyl-CoA epimerase and 3-hydroxyacyl-CoA dehydrogenase activities. In Shewanella loihica (strain ATCC BAA-1088 / PV-4), this protein is Fatty acid oxidation complex subunit alpha.